The primary structure comprises 567 residues: Probable serine/threonine-protein kinase WNK6 (567 aa).

One can recognise a Protein kinase domain in the interval isoleucine 28 to leucine 285. Residues threonine 108–phenylalanine 111 and lysine 158 each bind ATP. Aspartate 175 serves as the catalytic Proton acceptor. A compositionally biased stretch (basic and acidic residues) spans valine 499–serine 509. The disordered stretch occupies residues valine 499 to leucine 528. A compositionally biased stretch (acidic residues) spans glutamate 512–glutamate 525. The stretch at proline 519 to alanine 553 forms a coiled coil.

This sequence belongs to the protein kinase superfamily. Ser/Thr protein kinase family. WNK subfamily.

It catalyses the reaction L-seryl-[protein] + ATP = O-phospho-L-seryl-[protein] + ADP + H(+). The enzyme catalyses L-threonyl-[protein] + ATP = O-phospho-L-threonyl-[protein] + ADP + H(+). Functionally, may regulate flowering time by modulating the photoperiod pathway. In Arabidopsis thaliana (Mouse-ear cress), this protein is Probable serine/threonine-protein kinase WNK6 (WNK6).